A 316-amino-acid chain; its full sequence is Transaldolase (316 aa).

Residue Lys132 is the Schiff-base intermediate with substrate of the active site.

Belongs to the transaldolase family. Type 1 subfamily.

It is found in the cytoplasm. The enzyme catalyses D-sedoheptulose 7-phosphate + D-glyceraldehyde 3-phosphate = D-erythrose 4-phosphate + beta-D-fructose 6-phosphate. It participates in carbohydrate degradation; pentose phosphate pathway; D-glyceraldehyde 3-phosphate and beta-D-fructose 6-phosphate from D-ribose 5-phosphate and D-xylulose 5-phosphate (non-oxidative stage): step 2/3. Functionally, transaldolase is important for the balance of metabolites in the pentose-phosphate pathway. This is Transaldolase from Vibrio cholerae serotype O1 (strain ATCC 39315 / El Tor Inaba N16961).